A 273-amino-acid chain; its full sequence is Large ribosomal subunit protein uL2 (273 aa).

A disordered region spans residues 196–273; it reads GNSDHGLESS…SSKYIIERRK (78 aa). 2 stretches are compositionally biased toward basic residues: residues 209-220 and 255-264; these read GRTRWMGRRPRN and LKTRAPKKQS.

It belongs to the universal ribosomal protein uL2 family. In terms of assembly, part of the 50S ribosomal subunit. Forms a bridge to the 30S subunit in the 70S ribosome.

One of the primary rRNA binding proteins. Required for association of the 30S and 50S subunits to form the 70S ribosome, for tRNA binding and peptide bond formation. It has been suggested to have peptidyltransferase activity; this is somewhat controversial. Makes several contacts with the 16S rRNA in the 70S ribosome. The sequence is that of Large ribosomal subunit protein uL2 from Phocaeicola vulgatus (strain ATCC 8482 / DSM 1447 / JCM 5826 / CCUG 4940 / NBRC 14291 / NCTC 11154) (Bacteroides vulgatus).